The primary structure comprises 248 residues: Probable transcriptional regulatory protein Oter_1471 (248 aa).

Belongs to the TACO1 family.

The protein resides in the cytoplasm. The sequence is that of Probable transcriptional regulatory protein Oter_1471 from Opitutus terrae (strain DSM 11246 / JCM 15787 / PB90-1).